Consider the following 87-residue polypeptide: MTTVETLEPTITAEDVQQWLAEYIADVLEISESAIDFDTPFHQFGLDSSAVVGLVADLSEWSGVAIGIKSIRKNNSIHALSQFIAAK.

Residues 11–87 (ITAEDVQQWL…HALSQFIAAK (77 aa)) enclose the Carrier domain. At serine 48 the chain carries O-(pantetheine 4'-phosphoryl)serine.

Pantetheine 4'-phosphate is required as a cofactor.

In terms of biological role, carrier protein likely involved in the biosynthesis of a polyyne metabolite. Accepts as substrate the activated form of decanoic acid from TtuA. The polypeptide is Acyl carrier protein TtuC (Teredinibacter turnerae (strain ATCC 39867 / T7901)).